The chain runs to 433 residues: Oxaloacetate decarboxylase beta chain 2 (433 aa).

10 helical membrane-spanning segments follow: residues 16-36 (LGAGQAIMLLVSLLLLWLAIA), 42-62 (LLLLPIGFGGLLSNIPEAGMA), 122-142 (VLALFYKVAIGSGVAPLVIFM), 168-188 (FGIFATVLGALTLNYFGLIAF), 190-210 (LPQAAAIGIIGGADGPTAIYL), 216-236 (PELLGAIAVAAYSYMALVPLI), 266-286 (ILFPVVLLLLVALLLPDAAPL), 311-331 (NGLINIVTIFLGLSVGAKLVA), 340-360 (LGILLLGVIAFGIGTAAGVLM), and 413-433 (VAGVIGSAIAAGVMLKYVLAM).

The protein belongs to the GcdB/MmdB/OadB family. In terms of assembly, heterotrimer of an alpha, a beta and a gamma subunit. It depends on Na(+) as a cofactor.

It is found in the cell membrane. The enzyme catalyses oxaloacetate + 2 Na(+)(in) + H(+) = pyruvate + 2 Na(+)(out) + CO2. In terms of biological role, catalyzes the decarboxylation of oxaloacetate coupled to Na(+) translocation. In Salmonella typhi, this protein is Oxaloacetate decarboxylase beta chain 2 (oadB2).